The primary structure comprises 253 residues: Succinate dehydrogenase iron-sulfur subunit (253 aa).

The [2Fe-2S] cluster site is built by cysteine 64, cysteine 69, and cysteine 84. In terms of domain architecture, 4Fe-4S ferredoxin-type spans 146 to 174; sequence RQWAYELSKCMTCGVCLEACPNVNSKSKF. The [4Fe-4S] cluster site is built by cysteine 155, cysteine 158, and cysteine 161. Residues cysteine 165, cysteine 212, and cysteine 218 each contribute to the [3Fe-4S] cluster site. Cysteine 222 serves as a coordination point for [4Fe-4S] cluster.

The protein belongs to the succinate dehydrogenase/fumarate reductase iron-sulfur protein family. In B.subtilis succinate dehydrogenase forms part of an enzyme complex containing three subunits: a flavoprotein, an iron-sulfur protein and cytochrome b-558. It depends on [2Fe-2S] cluster as a cofactor. [3Fe-4S] cluster is required as a cofactor. [4Fe-4S] cluster serves as cofactor.

The catalysed reaction is a quinone + succinate = fumarate + a quinol. It functions in the pathway carbohydrate metabolism; tricarboxylic acid cycle; fumarate from succinate (bacterial route): step 1/1. This is Succinate dehydrogenase iron-sulfur subunit (sdhB) from Bacillus subtilis (strain 168).